A 430-amino-acid chain; its full sequence is Adenylosuccinate synthetase (430 aa).

GTP contacts are provided by residues 13 to 19 (GDEGKGK) and 41 to 43 (GHT). The active-site Proton acceptor is Asp14. The Mg(2+) site is built by Asp14 and Gly41. IMP is bound by residues 14 to 17 (DEGK), 39 to 42 (NAGH), Thr130, Arg144, Gln225, Thr240, and Arg304. Catalysis depends on His42, which acts as the Proton donor. 300–306 (STTGRAR) contributes to the substrate binding site. Residues Arg306, 332 to 334 (KLD), and 414 to 416 (STG) each bind GTP.

This sequence belongs to the adenylosuccinate synthetase family. In terms of assembly, homodimer. Requires Mg(2+) as cofactor.

The protein resides in the cytoplasm. The catalysed reaction is IMP + L-aspartate + GTP = N(6)-(1,2-dicarboxyethyl)-AMP + GDP + phosphate + 2 H(+). It functions in the pathway purine metabolism; AMP biosynthesis via de novo pathway; AMP from IMP: step 1/2. In terms of biological role, plays an important role in the de novo pathway of purine nucleotide biosynthesis. Catalyzes the first committed step in the biosynthesis of AMP from IMP. This is Adenylosuccinate synthetase from Alcanivorax borkumensis (strain ATCC 700651 / DSM 11573 / NCIMB 13689 / SK2).